We begin with the raw amino-acid sequence, 1178 residues long: DNA-directed RNA polymerase subunit beta' (1178 aa).

Zn(2+) contacts are provided by Cys60, Cys62, Cys75, and Cys78. Asp450, Asp452, and Asp454 together coordinate Mg(2+). Zn(2+) contacts are provided by Cys795, Cys869, Cys876, and Cys879.

This sequence belongs to the RNA polymerase beta' chain family. As to quaternary structure, the RNAP catalytic core consists of 2 alpha, 1 beta, 1 beta' and 1 omega subunit. When a sigma factor is associated with the core the holoenzyme is formed, which can initiate transcription. Requires Mg(2+) as cofactor. The cofactor is Zn(2+).

It carries out the reaction RNA(n) + a ribonucleoside 5'-triphosphate = RNA(n+1) + diphosphate. In terms of biological role, DNA-dependent RNA polymerase catalyzes the transcription of DNA into RNA using the four ribonucleoside triphosphates as substrates. The protein is DNA-directed RNA polymerase subunit beta' of Clostridium beijerinckii (strain ATCC 51743 / NCIMB 8052) (Clostridium acetobutylicum).